Reading from the N-terminus, the 624-residue chain is Chromosomal replication initiator protein DnaA (624 aa).

The segment at 1–99 is domain I, interacts with DnaA modulators; that stretch reads MADVPADLAA…SAGEPPSPPA (99 aa). The interval 88–284 is disordered; sequence DDSAGEPPSP…APGPGEPHAR (197 aa). The tract at residues 100–283 is domain II; it reads PPMHQSHQSQ…PAPGPGEPHA (184 aa). Residues 102–112 are compositionally biased toward low complexity; the sequence is MHQSHQSQQGH. Composition is skewed to basic and acidic residues over residues 118–141 and 176–206; these read QRDD…DGMP and GYQD…REQA. Gly residues predominate over residues 250–264; that stretch reads PRQGGHGPGRTGGSV. The interval 284–500 is domain III, AAA+ region; it reads RLNPKYLFDT…GALIRVTAFA (217 aa). Positions 328, 330, 331, and 332 each coordinate ATP. Positions 501 to 624 are domain IV, binds dsDNA; that stretch reads SLNRQPVDLG…TELTNRIKNG (124 aa).

This sequence belongs to the DnaA family. In terms of assembly, oligomerizes as a right-handed, spiral filament on DNA at oriC.

It localises to the cytoplasm. Plays an essential role in the initiation and regulation of chromosomal replication. ATP-DnaA binds to the origin of replication (oriC) to initiate formation of the DNA replication initiation complex once per cell cycle. Binds the DnaA box (a 9 base pair repeat at the origin) and separates the double-stranded (ds)DNA. Forms a right-handed helical filament on oriC DNA; dsDNA binds to the exterior of the filament while single-stranded (ss)DNA is stabiized in the filament's interior. The ATP-DnaA-oriC complex binds and stabilizes one strand of the AT-rich DNA unwinding element (DUE), permitting loading of DNA polymerase. After initiation quickly degrades to an ADP-DnaA complex that is not apt for DNA replication. Binds acidic phospholipids. In terms of biological role, the DnaA box consensus is 5'-(T/C)(T/C)(G/AC)TCCACA-3'. This chain is Chromosomal replication initiator protein DnaA, found in Streptomyces anulatus (Streptomyces chrysomallus).